The primary structure comprises 218 residues: Methylthioribulose-1-phosphate dehydratase (218 aa).

Zn(2+) is bound by residues His107 and His109.

Belongs to the aldolase class II family. MtnB subfamily. The cofactor is Zn(2+).

The enzyme catalyses 5-(methylsulfanyl)-D-ribulose 1-phosphate = 5-methylsulfanyl-2,3-dioxopentyl phosphate + H2O. It functions in the pathway amino-acid biosynthesis; L-methionine biosynthesis via salvage pathway; L-methionine from S-methyl-5-thio-alpha-D-ribose 1-phosphate: step 2/6. Functionally, catalyzes the dehydration of methylthioribulose-1-phosphate (MTRu-1-P) into 2,3-diketo-5-methylthiopentyl-1-phosphate (DK-MTP-1-P). This chain is Methylthioribulose-1-phosphate dehydratase, found in Xylella fastidiosa (strain 9a5c).